A 236-amino-acid chain; its full sequence is Serine/arginine-rich SC35-like splicing factor SCL28 (236 aa).

2 disordered regions span residues 1-53 (MARA…LIRN) and 124-219 (EENR…RVLT). Residues 14–43 (RPRDRSPPRERKGYDDNRLRERPSSRDHES) show a composition bias toward basic and acidic residues. Residues 47-125 (SGLLIRNLPL…REIAIVFAEE (79 aa)) enclose the RRM domain. Residues 149–176 (TSHRSPRRRYRSHSRSRSPPRRESRHSK) show a composition bias toward basic residues. Ser-184 is subject to Phosphoserine. Positions 199-217 (RNEREYKSRNCRSPREERV) are enriched in basic and acidic residues.

Belongs to the splicing factor SR family. SCL subfamily. As to quaternary structure, component of the spliceosome. Interacts with RS2Z33, CYP59, CYP63 and CYP95.

It localises to the nucleus speckle. Functionally, involved in intron recognition and spliceosome assembly. Probably active at the 5' splice sites. This Arabidopsis thaliana (Mouse-ear cress) protein is Serine/arginine-rich SC35-like splicing factor SCL28 (SCL28).